The chain runs to 128 residues: Probable 4-amino-4-deoxy-L-arabinose-phosphoundecaprenol flippase subunit ArnF (128 aa).

The Cytoplasmic segment spans residues 1-5 (MKGYG). Residues 6–26 (WGIGSVVLVTVAQLILKWGMM) form a helical membrane-spanning segment. Residues 27 to 47 (NTPLMSLADINGQFVFNHLPQ) lie on the Periplasmic side of the membrane. The helical transmembrane segment at 48 to 68 (FIAVICGLAGYALSMLCWFFA) threads the bilayer. At 69–77 (LRYLPLNRA) the chain is on the cytoplasmic side. A helical membrane pass occupies residues 78–98 (YPLLSLSYALVYLGAVSLPWF). Over 99–101 (SES) the chain is Periplasmic. A helical transmembrane segment spans residues 102–122 (ATLLKTLGAGFILLGIWLINT). Residues 123 to 128 (KPIAKD) are Cytoplasmic-facing.

The protein belongs to the ArnF family. In terms of assembly, heterodimer of ArnE and ArnF.

It is found in the cell inner membrane. The protein operates within bacterial outer membrane biogenesis; lipopolysaccharide biosynthesis. Functionally, translocates 4-amino-4-deoxy-L-arabinose-phosphoundecaprenol (alpha-L-Ara4N-phosphoundecaprenol) from the cytoplasmic to the periplasmic side of the inner membrane. The chain is Probable 4-amino-4-deoxy-L-arabinose-phosphoundecaprenol flippase subunit ArnF from Yersinia enterocolitica serotype O:8 / biotype 1B (strain NCTC 13174 / 8081).